An 85-amino-acid chain; its full sequence is Cell division topological specificity factor (85 aa).

Belongs to the MinE family.

Its function is as follows. Prevents the cell division inhibition by proteins MinC and MinD at internal division sites while permitting inhibition at polar sites. This ensures cell division at the proper site by restricting the formation of a division septum at the midpoint of the long axis of the cell. This Thioalkalivibrio sulfidiphilus (strain HL-EbGR7) protein is Cell division topological specificity factor.